Reading from the N-terminus, the 127-residue chain is Ribonuclease VapC9 (127 aa).

A PINc domain is found at 2–115; the sequence is IVVDASAALA…VTADLRLSDT (114 aa). 2 residues coordinate Mg(2+): Asp-5 and Asp-91.

It belongs to the PINc/VapC protein family. Mg(2+) serves as cofactor.

Toxic component of a type II toxin-antitoxin (TA) system. An RNase. The cognate antitoxin is VapB9. The chain is Ribonuclease VapC9 from Mycobacterium tuberculosis (strain CDC 1551 / Oshkosh).